We begin with the raw amino-acid sequence, 461 residues long: F-box protein At3g62230 (461 aa).

In terms of domain architecture, F-box spans 7–55; that stretch reads VDIISTLSDFLLVLIISNLSFKEALSTSRLSTRWRHICRETRNISFRED.

As to quaternary structure, part of a SCF (ASK-cullin-F-box) protein ligase complex. Interacts with ASK4.

It localises to the nucleus. The protein operates within protein modification; protein ubiquitination. In terms of biological role, component of SCF(ASK-cullin-F-box) E3 ubiquitin ligase complexes, which may mediate the ubiquitination and subsequent proteasomal degradation of target proteins. The sequence is that of F-box protein At3g62230 from Arabidopsis thaliana (Mouse-ear cress).